A 220-amino-acid chain; its full sequence is Deoxyribose-phosphate aldolase (220 aa).

Residue D89 is the Proton donor/acceptor of the active site. K151 serves as the catalytic Schiff-base intermediate with acetaldehyde. K180 serves as the catalytic Proton donor/acceptor.

The protein belongs to the DeoC/FbaB aldolase family. DeoC type 1 subfamily.

It localises to the cytoplasm. The catalysed reaction is 2-deoxy-D-ribose 5-phosphate = D-glyceraldehyde 3-phosphate + acetaldehyde. It functions in the pathway carbohydrate degradation; 2-deoxy-D-ribose 1-phosphate degradation; D-glyceraldehyde 3-phosphate and acetaldehyde from 2-deoxy-alpha-D-ribose 1-phosphate: step 2/2. Its function is as follows. Catalyzes a reversible aldol reaction between acetaldehyde and D-glyceraldehyde 3-phosphate to generate 2-deoxy-D-ribose 5-phosphate. The protein is Deoxyribose-phosphate aldolase of Streptococcus pneumoniae (strain CGSP14).